The primary structure comprises 287 residues: Phosphoribosylaminoimidazole-succinocarboxamide synthase (287 aa).

Belongs to the SAICAR synthetase family.

It carries out the reaction 5-amino-1-(5-phospho-D-ribosyl)imidazole-4-carboxylate + L-aspartate + ATP = (2S)-2-[5-amino-1-(5-phospho-beta-D-ribosyl)imidazole-4-carboxamido]succinate + ADP + phosphate + 2 H(+). It participates in purine metabolism; IMP biosynthesis via de novo pathway; 5-amino-1-(5-phospho-D-ribosyl)imidazole-4-carboxamide from 5-amino-1-(5-phospho-D-ribosyl)imidazole-4-carboxylate: step 1/2. This chain is Phosphoribosylaminoimidazole-succinocarboxamide synthase, found in Neisseria meningitidis serogroup C (strain 053442).